The primary structure comprises 58 residues: Small integral membrane protein 11 (58 aa).

Residues 9-29 (FPLLLYILAAKTLILCLAFAG) traverse the membrane as a helical segment. Residues 29-58 (GVKVYQRKRLEAKQQKVEAEKRKQAEKKES) adopt a coiled-coil conformation.

It is found in the membrane. This chain is Small integral membrane protein 11 (SMIM11), found in Bos taurus (Bovine).